The primary structure comprises 201 residues: Dynactin subunit 6 (201 aa).

The protein belongs to the dynactin subunits 5/6 family. Dynactin subunit 6 subfamily. Member of the pointed-end complex of the dynactin shoulder complex which contains dctn4, dctn5 and dctn6 subunits and Actr10. Within the complex dctn6 forms a heterodimer with dctn5. Interacts with plk1.

The protein localises to the cytoplasm. It localises to the cytoskeleton. It is found in the chromosome. The protein resides in the centromere. Its subcellular location is the kinetochore. In terms of biological role, part of the dynactin complex that activates the molecular motor dynein for ultra-processive transport along microtubules. The polypeptide is Dynactin subunit 6 (dctn6) (Xenopus tropicalis (Western clawed frog)).